A 970-amino-acid polypeptide reads, in one-letter code: Protein translocase subunit SecA (970 aa).

ATP-binding positions include glutamine 99, glycine 117–threonine 121, and aspartate 631.

Belongs to the SecA family. In terms of assembly, monomer and homodimer. Part of the essential Sec protein translocation apparatus which comprises SecA, SecYEG and auxiliary proteins SecDF. Other proteins may also be involved.

It localises to the cell inner membrane. The protein localises to the cytoplasm. It carries out the reaction ATP + H2O + cellular proteinSide 1 = ADP + phosphate + cellular proteinSide 2.. Functionally, part of the Sec protein translocase complex. Interacts with the SecYEG preprotein conducting channel. Has a central role in coupling the hydrolysis of ATP to the transfer of proteins into and across the cell membrane, serving as an ATP-driven molecular motor driving the stepwise translocation of polypeptide chains across the membrane. This Chlamydia caviae (strain ATCC VR-813 / DSM 19441 / 03DC25 / GPIC) (Chlamydophila caviae) protein is Protein translocase subunit SecA.